A 238-amino-acid chain; its full sequence is Flagellar L-ring protein (238 aa).

The N-terminal stretch at 1 to 16 (MNKAILAVAMVLLLAG) is a signal peptide. The N-palmitoyl cysteine moiety is linked to residue Cys17. Cys17 carries S-diacylglycerol cysteine lipidation.

This sequence belongs to the FlgH family. As to quaternary structure, the basal body constitutes a major portion of the flagellar organelle and consists of four rings (L,P,S, and M) mounted on a central rod.

The protein resides in the cell outer membrane. It localises to the bacterial flagellum basal body. Assembles around the rod to form the L-ring and probably protects the motor/basal body from shearing forces during rotation. The sequence is that of Flagellar L-ring protein from Brucella melitensis biotype 2 (strain ATCC 23457).